Consider the following 203-residue polypeptide: uncharacterized protein (203 aa).

A signal peptide spans 1–23 (MKKIYKALISSLLLSTSINVAYA). Residues 24–87 (ETQYVTENLS…ILNSDLSSTP (64 aa)) enclose the SH3b domain. The helical transmembrane segment at 167–189 (IAIQWFIYGGSVLGVGLLFGLLI) threads the bilayer.

This sequence to E.coli YgiM.

The protein localises to the membrane. This is an uncharacterized protein from Haemophilus influenzae (strain ATCC 51907 / DSM 11121 / KW20 / Rd).